The primary structure comprises 145 residues: Large ribosomal subunit protein uL15 (145 aa).

Composition is skewed to basic residues over residues 1–13 (MVRE…RGGH) and 19–29 (KAGRGKGKKGG). A disordered region spans residues 1-33 (MVRERTKKLRGGHYGRGMKAGRGKGKKGGRGNA).

Belongs to the universal ribosomal protein uL15 family. As to quaternary structure, part of the 50S ribosomal subunit.

Functionally, binds to the 23S rRNA. The sequence is that of Large ribosomal subunit protein uL15 from Thermoplasma volcanium (strain ATCC 51530 / DSM 4299 / JCM 9571 / NBRC 15438 / GSS1).